We begin with the raw amino-acid sequence, 467 residues long: UDP-N-acetylmuramate--L-alanine ligase (467 aa).

112-118 contacts ATP; sequence GTHGKTT.

It belongs to the MurCDEF family.

It is found in the cytoplasm. It carries out the reaction UDP-N-acetyl-alpha-D-muramate + L-alanine + ATP = UDP-N-acetyl-alpha-D-muramoyl-L-alanine + ADP + phosphate + H(+). It participates in cell wall biogenesis; peptidoglycan biosynthesis. Cell wall formation. The protein is UDP-N-acetylmuramate--L-alanine ligase of Polaromonas sp. (strain JS666 / ATCC BAA-500).